The sequence spans 400 residues: Argininosuccinate synthase (400 aa).

ATP is bound at residue 9-17 (AYSGGLDTS). Tyr-87 contributes to the L-citrulline binding site. An ATP-binding site is contributed by Gly-117. L-aspartate is bound by residues Thr-119, Asn-123, and Asp-124. Asn-123 serves as a coordination point for L-citrulline. L-citrulline-binding residues include Arg-127, Ser-176, Ser-185, Glu-261, and Tyr-273.

The protein belongs to the argininosuccinate synthase family. Type 1 subfamily. As to quaternary structure, homotetramer.

It is found in the cytoplasm. It catalyses the reaction L-citrulline + L-aspartate + ATP = 2-(N(omega)-L-arginino)succinate + AMP + diphosphate + H(+). It functions in the pathway amino-acid biosynthesis; L-arginine biosynthesis; L-arginine from L-ornithine and carbamoyl phosphate: step 2/3. This chain is Argininosuccinate synthase, found in Chlorobium phaeobacteroides (strain DSM 266 / SMG 266 / 2430).